We begin with the raw amino-acid sequence, 224 residues long: Large ribosomal subunit protein uL3 (224 aa).

Gln159 carries the post-translational modification N5-methylglutamine.

It belongs to the universal ribosomal protein uL3 family. As to quaternary structure, part of the 50S ribosomal subunit. Forms a cluster with proteins L14 and L19. Post-translationally, methylated by PrmB.

In terms of biological role, one of the primary rRNA binding proteins, it binds directly near the 3'-end of the 23S rRNA, where it nucleates assembly of the 50S subunit. The protein is Large ribosomal subunit protein uL3 of Herminiimonas arsenicoxydans.